A 67-amino-acid polypeptide reads, in one-letter code: Large ribosomal subunit protein uL29 (67 aa).

This sequence belongs to the universal ribosomal protein uL29 family.

The protein is Large ribosomal subunit protein uL29 of Methanothrix thermoacetophila (strain DSM 6194 / JCM 14653 / NBRC 101360 / PT) (Methanosaeta thermophila).